A 913-amino-acid polypeptide reads, in one-letter code: Auxilin (913 aa).

Met1 carries the N-acetylmethionine modification. A run of 3 repeats spans residues 36-39, 40-43, and 44-47. Residues 36-47 are 3 X 4 AA approximate tandem repeats; the sequence is NLKDNLKDTLKD. The 168-residue stretch at 55–222 folds into the Phosphatase tensin-type domain; it reads SVTSYTKGDL…GYMCDLLADK (168 aa). Ser112 is modified (phosphoserine). Cys164 functions as the Phosphocysteine intermediate in the catalytic mechanism. The 139-residue stretch at 228–366 folds into the C2 tensin-type domain; the sequence is FKPLTIKSIT…FQVTLDVELQ (139 aa). Positions 409 to 417 match the SH3-binding motif; that stretch reads PIDIPPDNP. The interval 451–776 is disordered; sequence QESEQSDDEL…GKGSSNLEGK (326 aa). 2 positions are modified to phosphoserine: Ser453 and Ser456. Over residues 506–523 the composition is skewed to polar residues; the sequence is AMSNSFSPPAAPPTNSEL. Positions 554 to 572 are enriched in low complexity; sequence ASTQSTPRRSATSTSASPT. A phosphoserine mark is found at Ser563 and Ser570. Polar residues predominate over residues 599 to 629; it reads FLNTSSASSDPFLQPTRSPSPTVHASSTPAV. Positions 654 to 669 are enriched in low complexity; sequence SAATSPTGSSHGTPTH. One can recognise a J domain in the interval 849-913; sequence TKWKPVGMAD…FENQGQKPLY (65 aa).

As to quaternary structure, forms a complex composed of HSPA8, CLTC and DNAJC6. Interacts with HSPA8/HSC70 in an ATP-dependent manner; this interaction stimulates the HSPA8's ATPase activity. Interacts with CLTC; this interaction produces a local change in heavy-chain contacts, creating a detectable global distortion of the clathrin coat. Interacts with AP2A2. Interacts with DNM1(GTP-bound form); this interaction allows clathrin-coated vesicle (CCV) formation at the plasma membrane. Phosphorylation at Ser-570 modulates its ability to bind CLTC and therefore the synaptic vesicle endocytosis (SVE). In terms of processing, the N-terminus is blocked. As to expression, expressed in various brain regions, including cerebellum, corpus callosum, cortex, striatum, brainstem, pons, putamen, spinal cord and substantia nigra. Very low expression in non-neural tissues such as leukocytes, liver, adipose tissue, skeletal muscle and bone marrow.

The protein localises to the cytoplasmic vesicle. Its subcellular location is the clathrin-coated vesicle. Its function is as follows. May act as a protein phosphatase and/or a lipid phosphatase. Co-chaperone that recruits HSPA8/HSC70 to clathrin-coated vesicles (CCVs) and promotes the ATP-dependent dissociation of clathrin from CCVs and participates in clathrin-mediated endocytosis of synaptic vesicles and their recycling and also in intracellular trafficking. Firstly, binds tightly to the clathrin cages, at a ratio of one DNAJC6 per clathrin triskelion. The HSPA8:ATP complex then binds to the clathrin-auxilin cage, initially at a ratio of one HSPA8 per triskelion leading to ATP hydrolysis stimulation and causing a conformational change in the HSPA8. This cycle is repeated three times to drive to a complex containing the clathrin-auxilin cage associated to three HSPA8:ADP complex. The ATP hydrolysis of the third HSPA8:ATP complex leads to a concerted dismantling of the cage into component triskelia. Then, dissociates from the released triskelia and be recycled to initiate another cycle of HSPA8's recruitment. Also acts during the early steps of clathrin-coated vesicle (CCV) formation through its interaction with the GTP bound form of DNM1. The polypeptide is Auxilin (Homo sapiens (Human)).